Reading from the N-terminus, the 182-residue chain is Plasmolipin (182 aa).

Residues 1–20 (MAEFPSKVNTRTSSPAQGGG) are disordered. Topologically, residues 1 to 35 (MAEFPSKVNTRTSSPAQGGGAVVSTLSPDLGFVRS) are cytoplasmic. Residues 7 to 16 (KVNTRTSSPA) show a composition bias toward polar residues. An MARVEL domain is found at 32-166 (FVRSSLGALM…SAFLSFQAWR (135 aa)). A helical transmembrane segment spans residues 36–56 (SLGALMLLQLVLGLLVWALIA). Residues 57-68 (DTPYHLYPSYGW) are Extracellular-facing. The helical transmembrane segment at 69–89 (VMFVAVFLWLVTIIFFVLYLF) threads the bilayer. Residues 90 to 99 (QLHMKLYMVP) lie on the Cytoplasmic side of the membrane. The chain crosses the membrane as a helical span at residues 100 to 120 (WPLVLMVFNVGATVLYITAFI). Over 121–141 (TCSASVELTSLKGSQPYNQRA) the chain is Extracellular. Residues 142–162 (AASFFSCLVMIAYGVSAFLSF) traverse the membrane as a helical segment. The Cytoplasmic portion of the chain corresponds to 163-182 (QAWRGVGSNAATSQMAGGYA).

The protein belongs to the MAL family. As to quaternary structure, forms oligomers. In terms of processing, phosphorylated.

The protein resides in the cell membrane. It is found in the myelin membrane. Its subcellular location is the apical cell membrane. Main component of the myelin sheath that plays an important role in myelin membrane biogenesis and myelination. Plays an essential function in apical endocytosis. Regulates epithelial development through the regulation of apical endocytosis. Part of the intracellular machinery that mediates basolateral-to-apical transport of ICAM-1, an essential adhesion receptor in epithelial cells, from the subapical compartment in hepatic epithelial cells. In Bos taurus (Bovine), this protein is Plasmolipin (PLLP).